The chain runs to 425 residues: ADP-ribose glycohydrolase MACROD2 (425 aa).

The 182-residue stretch at 59-240 folds into the Macro domain; sequence QETSQVKKSL…IYKKKMNEFF (182 aa). Substrate is bound by residues 77–79, 90–92, and 97–102; these read GDI, AAN, and GGGGVD. Lysine 170 is covalently cross-linked (Glycyl lysine isopeptide (Lys-Gly) (interchain with G-Cter in ubiquitin)). Residues 185–191 and phenylalanine 224 contribute to the substrate site; that span reads ISTGIYG. Positions 243–425 are disordered; it reads DDNNEEEEDV…EAKEQRNGTK (183 aa). Over residues 244 to 262 the composition is skewed to acidic residues; the sequence is DNNEEEEDVEMKEDSDENG. Residues 302–343 show a composition bias toward basic and acidic residues; that stretch reads EDFAKDENITKGGEVTDHSVRDQDHPDGQENDSTKNEIKIET. Positions 344–360 are enriched in polar residues; it reads ESQSSYMETEELSSNQE. Basic and acidic residues-rich tracts occupy residues 381–391 and 415–425; these read EGEKAPGEDTP and DEAKEQRNGTK.

Belongs to the MacroD-type family. MacroD1/2-like subfamily. As to quaternary structure, interacts with ADP-ribosylated PARP1.

The protein resides in the nucleus. It catalyses the reaction 2''-O-acetyl-ADP-D-ribose + H2O = ADP-D-ribose + acetate + H(+). The enzyme catalyses 4-O-(ADP-D-ribosyl)-L-aspartyl-[protein] + H2O = L-aspartyl-[protein] + ADP-D-ribose + H(+). It carries out the reaction 5-O-(ADP-D-ribosyl)-L-glutamyl-[protein] + H2O = L-glutamyl-[protein] + ADP-D-ribose + H(+). The catalysed reaction is alpha-NAD(+) + H2O = ADP-D-ribose + nicotinamide + H(+). Subject to product inhibition by ADP-ribose. Functionally, removes ADP-ribose from aspartate and glutamate residues in proteins bearing a single ADP-ribose moiety. Inactive towards proteins bearing poly-ADP-ribose. Deacetylates O-acetyl-ADP ribose, a signaling molecule generated by the deacetylation of acetylated lysine residues in histones and other proteins. This is ADP-ribose glycohydrolase MACROD2 from Homo sapiens (Human).